The sequence spans 239 residues: MILYPAIDLKDGQCVRLLRGEMEAATVFGDDPAAQAAAFEAAGCEWLHLVDLNGAFAGHPVNGAAVEAILARLTVPAQLGGGIRDMKTIALWLEKGLARVILGTVAVENPALVREAARAFPGRVAVGIDARKGRVATKGWATETDVMATDLARSFEDAGVAALIYTDIDRDGAMAGPNIEATDALARAVSIPVIASGGVSSLADLVALRDTGRIAGAISGRALYDGALDLAEALRTLRA.

Residue Asp8 is the Proton acceptor of the active site. The active-site Proton donor is Asp129.

The protein belongs to the HisA/HisF family.

The protein resides in the cytoplasm. The enzyme catalyses 1-(5-phospho-beta-D-ribosyl)-5-[(5-phospho-beta-D-ribosylamino)methylideneamino]imidazole-4-carboxamide = 5-[(5-phospho-1-deoxy-D-ribulos-1-ylimino)methylamino]-1-(5-phospho-beta-D-ribosyl)imidazole-4-carboxamide. The protein operates within amino-acid biosynthesis; L-histidine biosynthesis; L-histidine from 5-phospho-alpha-D-ribose 1-diphosphate: step 4/9. The polypeptide is 1-(5-phosphoribosyl)-5-[(5-phosphoribosylamino)methylideneamino] imidazole-4-carboxamide isomerase (Cereibacter sphaeroides (strain ATCC 17025 / ATH 2.4.3) (Rhodobacter sphaeroides)).